The following is a 175-amino-acid chain: uncharacterized protein (175 aa).

Residues 1 to 14 (MNTSSRIQLPSSND) show a composition bias toward polar residues. Disordered stretches follow at residues 1 to 31 (MNTS…SKRS) and 127 to 175 (ARSR…QSKR). Residues 16–27 (HVYDGRSNEPKA) show a composition bias toward basic and acidic residues. Low complexity predominate over residues 130-149 (RASSVSNSRLNSRTNSSVSL). Polar residues predominate over residues 154-175 (GSSSWKNKIKNAVSNVTDQSKR).

Its subcellular location is the cytoplasm. It is found in the nucleus. This is an uncharacterized protein from Schizosaccharomyces pombe (strain 972 / ATCC 24843) (Fission yeast).